We begin with the raw amino-acid sequence, 143 residues long: Transcriptional regulator MraZ (143 aa).

SpoVT-AbrB domains are found at residues 5–47 (EYLH…PLDE) and 76–119 (ATEC…SQAL).

The protein belongs to the MraZ family. As to quaternary structure, forms oligomers.

It is found in the cytoplasm. The protein resides in the nucleoid. This Desulfitobacterium hafniense (strain Y51) protein is Transcriptional regulator MraZ.